The primary structure comprises 187 residues: Protein GrpE (187 aa).

The segment at 1-30 (MEKKETKSESEKTNKQDNKNTKSQKKENLN) is disordered.

This sequence belongs to the GrpE family. Homodimer.

The protein localises to the cytoplasm. Functionally, participates actively in the response to hyperosmotic and heat shock by preventing the aggregation of stress-denatured proteins, in association with DnaK and GrpE. It is the nucleotide exchange factor for DnaK and may function as a thermosensor. Unfolded proteins bind initially to DnaJ; upon interaction with the DnaJ-bound protein, DnaK hydrolyzes its bound ATP, resulting in the formation of a stable complex. GrpE releases ADP from DnaK; ATP binding to DnaK triggers the release of the substrate protein, thus completing the reaction cycle. Several rounds of ATP-dependent interactions between DnaJ, DnaK and GrpE are required for fully efficient folding. The sequence is that of Protein GrpE from Borreliella burgdorferi (strain ATCC 35210 / DSM 4680 / CIP 102532 / B31) (Borrelia burgdorferi).